A 237-amino-acid polypeptide reads, in one-letter code: Large ribosomal subunit protein uL1 (237 aa).

This sequence belongs to the universal ribosomal protein uL1 family. Part of the 50S ribosomal subunit.

Binds directly to 23S rRNA. The L1 stalk is quite mobile in the ribosome, and is involved in E site tRNA release. In terms of biological role, protein L1 is also a translational repressor protein, it controls the translation of the L11 operon by binding to its mRNA. The polypeptide is Large ribosomal subunit protein uL1 (Solibacter usitatus (strain Ellin6076)).